Here is a 612-residue protein sequence, read N- to C-terminus: Cytoplasmic dynein 1 intermediate chain 2 (612 aa).

Basic and acidic residues-rich tracts occupy residues 1–13 (MSDKSELKAELER) and 20–43 (QIREGKKRKEEERKKKETDQKKEA). Disordered regions lie at residues 1-117 (MSDK…MAKI) and 129-188 (TYTK…EEKQ). The residue at position 2 (serine 2) is an N-acetylserine. Serine 51 bears the Diphosphoserine mark. Serine 51 and serine 84 each carry phosphoserine. Positions 82–91 (PSSKSVSTPS) are enriched in low complexity. The residue at position 89 (threonine 89) is a Phosphothreonine. 3 positions are modified to phosphoserine: serine 91, serine 95, and serine 98. A compositionally biased stretch (basic and acidic residues) spans 164 to 188 (EKTLKKDEESDSKAPPHELTEEEKQ). WD repeat units lie at residues 251–300 (SKHR…TTPE), 304–344 (HCQS…RTPV), 353–394 (AHTH…HPQD), 403–443 (SKAV…AGIS), 448–493 (GHQG…PLYS), 496–536 (DNSD…EVPT), and 542–581 (EGNPALNRVRWTHSGREIAVGDSEGQIVIYDVGEQIAVPR).

Belongs to the dynein intermediate chain family. As to quaternary structure, homodimer. The cytoplasmic dynein 1 complex consists of two catalytic heavy chains (HCs) and a number of non-catalytic subunits presented by intermediate chains (ICs), light intermediate chains (LICs) and light chains (LCs); the composition seems to vary in respect to the IC, LIC and LC composition. The heavy chain homodimer serves as a scaffold for the probable homodimeric assembly of the respective non-catalytic subunits. The ICs and LICs bind directly to the HC dimer and the LCs assemble on the IC dimer. Interacts with DYNLT3. Interacts with DYNLT1. Interacts (dephosphorylated at Ser-84) with DCTN1. Interacts with BICD2. Interacts with SPEF2. Interacts with CFAP61. The phosphorylation status of Ser-84 appears to be involved in dynactin-dependent target binding. In terms of processing, pyrophosphorylation by 5-diphosphoinositol pentakisphosphate (5-IP7) promotes interaction with DCTN1. Serine pyrophosphorylation is achieved by Mg(2+)-dependent, but enzyme independent transfer of a beta-phosphate from a inositol pyrophosphate to a pre-phosphorylated serine residue.

Its subcellular location is the cytoplasm. It localises to the cytoskeleton. Its function is as follows. Acts as one of several non-catalytic accessory components of the cytoplasmic dynein 1 complex that are thought to be involved in linking dynein to cargos and to adapter proteins that regulate dynein function. Cytoplasmic dynein 1 acts as a motor for the intracellular retrograde motility of vesicles and organelles along microtubules. The intermediate chains mediate the binding of dynein to dynactin via its 150 kDa component (p150-glued) DCTN1. Involved in membrane-transport, such as Golgi apparatus, late endosomes and lysosomes. This Bos taurus (Bovine) protein is Cytoplasmic dynein 1 intermediate chain 2 (DYNC1I2).